We begin with the raw amino-acid sequence, 272 residues long: Putative phosphoenolpyruvate synthase regulatory protein (272 aa).

Residue glycine 152 to threonine 159 coordinates ADP.

This sequence belongs to the pyruvate, phosphate/water dikinase regulatory protein family. PSRP subfamily.

It carries out the reaction [pyruvate, water dikinase] + ADP = [pyruvate, water dikinase]-phosphate + AMP + H(+). It catalyses the reaction [pyruvate, water dikinase]-phosphate + phosphate + H(+) = [pyruvate, water dikinase] + diphosphate. Bifunctional serine/threonine kinase and phosphorylase involved in the regulation of the phosphoenolpyruvate synthase (PEPS) by catalyzing its phosphorylation/dephosphorylation. The chain is Putative phosphoenolpyruvate synthase regulatory protein from Methylibium petroleiphilum (strain ATCC BAA-1232 / LMG 22953 / PM1).